The chain runs to 767 residues: DNA topoisomerase 1 (767 aa).

Residues 1–23 are compositionally biased toward basic and acidic residues; the sequence is MSGDHLHNDSQIEADFRLNDSHK. Residues 1–201 form a disordered region; that stretch reads MSGDHLHNDS…NKKKKPKKEE (201 aa). At serine 2 the chain carries N-acetylserine. Phosphoserine is present on residues serine 2 and serine 10. The span at 24–39 shows a compositional bias: basic residues; it reads HKDKHKDREHRHKEHK. The segment covering 40 to 110 has biased composition (basic and acidic residues); the sequence is KDKEKDREKS…DAKIKKEKEN (71 aa). A Phosphoserine modification is found at serine 59. Lysine 103 is covalently cross-linked (Glycyl lysine isopeptide (Lys-Gly) (interchain with G-Cter in SUMO2)). Residue lysine 105 forms a Glycyl lysine isopeptide (Lys-Gly) (interchain with G-Cter in SUMO); alternate linkage. Lysine 105 is covalently cross-linked (Glycyl lysine isopeptide (Lys-Gly) (interchain with G-Cter in SUMO2); alternate). Residue serine 114 is modified to Phosphoserine. Residue lysine 119 forms a Glycyl lysine isopeptide (Lys-Gly) (interchain with G-Cter in SUMO); alternate linkage. A Glycyl lysine isopeptide (Lys-Gly) (interchain with G-Cter in SUMO2); alternate cross-link involves residue lysine 119. Lysine 119 participates in a covalent cross-link: Glycyl lysine isopeptide (Lys-Gly) (interchain with G-Cter in SUMO1); alternate. Positions 131–168 are enriched in basic and acidic residues; the sequence is PKEDIKPLKRPRDEDDADYKPKKIKTEDIKKEKKRKLE. Residues lysine 136 and lysine 150 each participate in a glycyl lysine isopeptide (Lys-Gly) (interchain with G-Cter in SUMO2) cross-link. Lysine 155 participates in a covalent cross-link: Glycyl lysine isopeptide (Lys-Gly) (interchain with G-Cter in SUMO); alternate. Lysine 155 is covalently cross-linked (Glycyl lysine isopeptide (Lys-Gly) (interchain with G-Cter in SUMO2); alternate). Glycyl lysine isopeptide (Lys-Gly) (interchain with G-Cter in SUMO2) cross-links involve residues lysine 160 and lysine 166. Residue lysine 174 forms a Glycyl lysine isopeptide (Lys-Gly) (interchain with G-Cter in SUMO2); alternate linkage. An N6-acetyllysine; alternate modification is found at lysine 174. Positions 181–201 are enriched in basic and acidic residues; sequence KDKDKKGAESDNKKKKPKKEE. A Glycyl lysine isopeptide (Lys-Gly) (interchain with G-Cter in SUMO2) cross-link involves residue lysine 206. Position 282 is an N6-acetyllysine (lysine 282). Residue lysine 338 forms a Glycyl lysine isopeptide (Lys-Gly) (interchain with G-Cter in SUMO2) linkage. 2 interaction with DNA regions span residues 427-428 and 490-495; these read KY and RAGNEK. The 334-residue stretch at 434–767 folds into the Topo IB-type catalytic domain; it reads SSRIKGEKDW…IDMTDEDYEF (334 aa). At serine 508 the chain carries Phosphoserine; by CK2. Lysine 551 participates in a covalent cross-link: Glycyl lysine isopeptide (Lys-Gly) (interchain with G-Cter in SUMO2). The interaction with DNA stretch occupies residues 587–589; the sequence is TAK. Residues lysine 644, lysine 702, and lysine 714 each participate in a glycyl lysine isopeptide (Lys-Gly) (interchain with G-Cter in SUMO2) cross-link. The O-(3'-phospho-DNA)-tyrosine intermediate role is filled by tyrosine 725.

The protein belongs to the type IB topoisomerase family. In terms of assembly, monomer. Interacts with ERCC6. Interacts with TPRN; TPRN interacts with a number of DNA damage response proteins, is recruited to sites of DNA damage and may play a role in DNA damage repair. In terms of processing, sumoylated. Lys-119 is the main site of sumoylation. Sumoylation plays a role in partitioning TOP1 between nucleoli and nucleoplasm. Levels are dramatically increased on camptothecin (CPT) treatment. Post-translationally, phosphorylation at Ser-508 by CK2 increases binding to supercoiled DNA and sensitivity to camptothecin.

The protein localises to the nucleus. It is found in the nucleolus. It localises to the nucleoplasm. It catalyses the reaction ATP-independent breakage of single-stranded DNA, followed by passage and rejoining.. With respect to regulation, specifically inhibited by camptothecin (CPT), a plant alkaloid with antitumor activity. Releases the supercoiling and torsional tension of DNA introduced during the DNA replication and transcription by transiently cleaving and rejoining one strand of the DNA duplex. Introduces a single-strand break via transesterification at a target site in duplex DNA. The scissile phosphodiester is attacked by the catalytic tyrosine of the enzyme, resulting in the formation of a DNA-(3'-phosphotyrosyl)-enzyme intermediate and the expulsion of a 5'-OH DNA strand. The free DNA strand then rotates around the intact phosphodiester bond on the opposing strand, thus removing DNA supercoils. Finally, in the religation step, the DNA 5'-OH attacks the covalent intermediate to expel the active-site tyrosine and restore the DNA phosphodiester backbone. Regulates the alternative splicing of tissue factor (F3) pre-mRNA in endothelial cells. Involved in the circadian transcription of the core circadian clock component BMAL1 by altering the chromatin structure around the ROR response elements (ROREs) on the BMAL1 promoter. The sequence is that of DNA topoisomerase 1 (TOP1) from Cricetulus griseus (Chinese hamster).